We begin with the raw amino-acid sequence, 601 residues long: Serine/threonine-protein phosphatase 2A 65 kDa regulatory subunit A beta isoform (601 aa).

The residue at position 2 (Ala-2) is an N-acetylalanine. 15 HEAT repeats span residues 20–58, 59–96, 97–135, 136–173, 174–212, 213–251, 252–290, 291–333, 334–372, 373–411, 412–450, 451–489, 490–528, 529–567, and 568–601; these read DSLY…GVER, TRSE…GGPD, FAHC…TPVA, LEAY…ASNA, VKAE…ELDS, VKSE…SQDD, LETL…GPKI, TLND…RETI, IMNQ…GKEN, TIEH…GIRQ, LSQS…GVEF, FDEK…GTEW, AQNT…GQEI, TTKQ…DTNA, and LQGE…LALA.

This sequence belongs to the phosphatase 2A regulatory subunit A family. PP2A consists of a common heterodimeric core enzyme, composed of a 36 kDa catalytic subunit (subunit C) and a 65 kDa constant regulatory subunit (PR65 or subunit A), that associates with a variety of regulatory subunits. Proteins that associate with the core dimer include three families of regulatory subunits B (the R2/B/PR55/B55, R3/B''/PR72/PR130/PR59 and R5/B'/B56 families), the 48 kDa variable regulatory subunit, viral proteins, and cell signaling molecules. Interacts with IPO9. Interacts with SGO1. Interacts with RAF1.

Its function is as follows. The PR65 subunit of protein phosphatase 2A serves as a scaffolding molecule to coordinate the assembly of the catalytic subunit and a variable regulatory B subunit. The sequence is that of Serine/threonine-protein phosphatase 2A 65 kDa regulatory subunit A beta isoform (PPP2R1B) from Homo sapiens (Human).